Consider the following 376-residue polypeptide: Glutamate 5-kinase (376 aa).

K15 lines the ATP pocket. The substrate site is built by S56, D143, and N155. 175-176 provides a ligand contact to ATP; the sequence is SD. The PUA domain occupies 281 to 358; that stretch reads KGTLTIDAGA…PDVMSILGIT (78 aa).

Belongs to the glutamate 5-kinase family.

It localises to the cytoplasm. The catalysed reaction is L-glutamate + ATP = L-glutamyl 5-phosphate + ADP. Its pathway is amino-acid biosynthesis; L-proline biosynthesis; L-glutamate 5-semialdehyde from L-glutamate: step 1/2. In terms of biological role, catalyzes the transfer of a phosphate group to glutamate to form L-glutamate 5-phosphate. The chain is Glutamate 5-kinase from Rhodopseudomonas palustris (strain BisB18).